We begin with the raw amino-acid sequence, 571 residues long: Acetolactate synthase large subunit (571 aa).

Residue glutamate 51 coordinates thiamine diphosphate. FAD is bound by residues arginine 153, 261 to 282, and 304 to 323; these read HGTY…IGVR and DIDP…IVGD. The tract at residues 394 to 474 is thiamine pyrophosphate binding; sequence QHQMFTALYY…VLILNLNNSS (81 aa). The Mg(2+) site is built by aspartate 445 and asparagine 472.

Belongs to the TPP enzyme family. In terms of assembly, dimer of large and small chains. It depends on Mg(2+) as a cofactor. Requires thiamine diphosphate as cofactor.

The catalysed reaction is 2 pyruvate + H(+) = (2S)-2-acetolactate + CO2. It participates in amino-acid biosynthesis; L-isoleucine biosynthesis; L-isoleucine from 2-oxobutanoate: step 1/4. Its pathway is amino-acid biosynthesis; L-valine biosynthesis; L-valine from pyruvate: step 1/4. The sequence is that of Acetolactate synthase large subunit (ilvI) from Buchnera aphidicola subsp. Schizaphis graminum (strain Sg).